A 213-amino-acid chain; its full sequence is uncharacterized protein (213 aa).

Residues 22-42 (WFGLSMVSIAVIFGPLTGAHV) form a helical membrane-spanning segment. The short motif at 43 to 45 (NPA) is the NPA 1 element. Helical transmembrane passes span 63–83 (VYII…WLLF), 112–132 (NLLS…TLNH), and 138–158 (GVAM…FGGL). The short motif at 164-166 (NPA) is the NPA 2 element. The chain crosses the membrane as a helical span at residues 188–208 (FDYAWVPVLRPVIGAILAAWL).

Belongs to the MIP/aquaporin (TC 1.A.8) family.

The protein localises to the cell membrane. This is an uncharacterized protein from Haemophilus influenzae (strain ATCC 51907 / DSM 11121 / KW20 / Rd).